Consider the following 276-residue polypeptide: Large ribosomal subunit protein uL2 (276 aa).

The tract at residues 219–268 (TVRGSVMNPNDHPHGGGEGRQPVGRKSPMTPWGKPALGLKTRNKKAKSSK) is disordered.

The protein belongs to the universal ribosomal protein uL2 family. Part of the 50S ribosomal subunit. Forms a bridge to the 30S subunit in the 70S ribosome.

One of the primary rRNA binding proteins. Required for association of the 30S and 50S subunits to form the 70S ribosome, for tRNA binding and peptide bond formation. It has been suggested to have peptidyltransferase activity; this is somewhat controversial. Makes several contacts with the 16S rRNA in the 70S ribosome. The chain is Large ribosomal subunit protein uL2 from Lactococcus lactis subsp. cremoris (strain MG1363).